A 347-amino-acid chain; its full sequence is GMP reductase (347 aa).

108–131 (ADFEKTKQILDLNPALNFVCIDVA) is an NADP(+) binding site. The K(+) site is built by glycine 181 and glycine 183. The active-site Thioimidate intermediate is cysteine 186. An NADP(+)-binding site is contributed by 216–239 (IVSDGGCTTPGDVAKAFGGGADFV).

This sequence belongs to the IMPDH/GMPR family. GuaC type 1 subfamily. Homotetramer.

It carries out the reaction IMP + NH4(+) + NADP(+) = GMP + NADPH + 2 H(+). In terms of biological role, catalyzes the irreversible NADPH-dependent deamination of GMP to IMP. It functions in the conversion of nucleobase, nucleoside and nucleotide derivatives of G to A nucleotides, and in maintaining the intracellular balance of A and G nucleotides. This is GMP reductase from Shigella dysenteriae serotype 1 (strain Sd197).